A 244-amino-acid polypeptide reads, in one-letter code: Thiol S-methyltransferase TMT1B (244 aa).

The signal sequence occupies residues Met-1 to Ala-23.

The protein belongs to the methyltransferase superfamily. In terms of tissue distribution, highly expressed in liver and kidney. No expression in testis, heart, lung, brain, spleen or cultured fibroblasts.

The protein resides in the endoplasmic reticulum membrane. The protein localises to the lipid droplet. Its subcellular location is the microsome. It is found in the cytoplasm. It localises to the cytosol. It catalyses the reaction a thiol + S-adenosyl-L-methionine = a methyl thioether + S-adenosyl-L-homocysteine + H(+). Its function is as follows. Thiol S-methyltransferase that catalyzes the transfer of a methyl group from S-adenosyl-L-methionine to alkyl and phenolic thiol-containing acceptor substrates. Together with TMT1B accounts for most of S-thiol methylation activity in the endoplasmic reticulum of hepatocytes. Selectively methylates S-centered nucleophiles from metabolites such as hydrogen sulfide and dithiothreitol. This Rattus norvegicus (Rat) protein is Thiol S-methyltransferase TMT1B (Tmt1b).